The primary structure comprises 438 residues: 5-methylthioadenosine/S-adenosylhomocysteine deaminase (438 aa).

Zn(2+) is bound by residues His71 and His73. Positions 100 and 192 each coordinate substrate. Residue His219 participates in Zn(2+) binding. Residues Glu222 and Asp307 each contribute to the substrate site. Position 307 (Asp307) interacts with Zn(2+).

Belongs to the metallo-dependent hydrolases superfamily. MTA/SAH deaminase family. It depends on Zn(2+) as a cofactor.

The enzyme catalyses S-adenosyl-L-homocysteine + H2O + H(+) = S-inosyl-L-homocysteine + NH4(+). It carries out the reaction S-methyl-5'-thioadenosine + H2O + H(+) = S-methyl-5'-thioinosine + NH4(+). Functionally, catalyzes the deamination of 5-methylthioadenosine and S-adenosyl-L-homocysteine into 5-methylthioinosine and S-inosyl-L-homocysteine, respectively. Is also able to deaminate adenosine. The sequence is that of 5-methylthioadenosine/S-adenosylhomocysteine deaminase from Syntrophobacter fumaroxidans (strain DSM 10017 / MPOB).